A 372-amino-acid polypeptide reads, in one-letter code: Bifunctional enzyme IspD/IspF (372 aa).

The segment at 1-210 (MLDLSLIMLG…LNLNSPSNDI (210 aa)) is 2-C-methyl-D-erythritol 4-phosphate cytidylyltransferase. Positions 211-372 (FCGNGFDVHA…LKYFNWRNVL (162 aa)) are 2-C-methyl-D-erythritol 2,4-cyclodiphosphate synthase. A divalent metal cation contacts are provided by Asp217 and His219. 4-CDP-2-C-methyl-D-erythritol 2-phosphate is bound by residues 217-219 (DVH) and 243-244 (HS). His251 is an a divalent metal cation binding site. 4-CDP-2-C-methyl-D-erythritol 2-phosphate contacts are provided by residues 265–267 (DIG), 270–274 (YPDND), 341–344 (TTTE), Phe348, and Arg351.

It in the N-terminal section; belongs to the IspD/TarI cytidylyltransferase family. IspD subfamily. This sequence in the C-terminal section; belongs to the IspF family. The cofactor is a divalent metal cation.

It carries out the reaction 2-C-methyl-D-erythritol 4-phosphate + CTP + H(+) = 4-CDP-2-C-methyl-D-erythritol + diphosphate. The enzyme catalyses 4-CDP-2-C-methyl-D-erythritol 2-phosphate = 2-C-methyl-D-erythritol 2,4-cyclic diphosphate + CMP. Its pathway is isoprenoid biosynthesis; isopentenyl diphosphate biosynthesis via DXP pathway; isopentenyl diphosphate from 1-deoxy-D-xylulose 5-phosphate: step 2/6. It participates in isoprenoid biosynthesis; isopentenyl diphosphate biosynthesis via DXP pathway; isopentenyl diphosphate from 1-deoxy-D-xylulose 5-phosphate: step 4/6. In terms of biological role, bifunctional enzyme that catalyzes the formation of 4-diphosphocytidyl-2-C-methyl-D-erythritol from CTP and 2-C-methyl-D-erythritol 4-phosphate (MEP) (IspD), and catalyzes the conversion of 4-diphosphocytidyl-2-C-methyl-D-erythritol 2-phosphate (CDP-ME2P) to 2-C-methyl-D-erythritol 2,4-cyclodiphosphate (ME-CPP) with a corresponding release of cytidine 5-monophosphate (CMP) (IspF). In Campylobacter fetus subsp. fetus (strain 82-40), this protein is Bifunctional enzyme IspD/IspF.